A 434-amino-acid polypeptide reads, in one-letter code: [Pyruvate dehydrogenase (acetyl-transferring)] kinase isozyme 1, mitochondrial (434 aa).

A mitochondrion-targeting transit peptide spans 1–26; sequence MRLARLLRGGTSVRPLCAVPCASRSL. Tyr-136 carries the post-translational modification Phosphotyrosine; by FGFR1. In terms of domain architecture, Histidine kinase spans 161–391; the sequence is TEYKESFGVD…DAVIYIKALS (231 aa). A Phosphotyrosine; by FGFR1, ABL1, FLT3 and JAK2 modification is found at Tyr-241. Residue Tyr-242 is modified to Phosphotyrosine; by FGFR1. ATP-binding positions include 277–284, Asp-316, 335–336, and 352–357; these read ELFKNAMR, ST, and GFGYGL. At Thr-336 the chain carries Phosphothreonine. Lys-403 bears the N6-succinyllysine mark.

Belongs to the PDK/BCKDK protein kinase family. In terms of assembly, homodimer, and heterodimer with PDK2. Interacts with the pyruvate dehydrogenase complex subunit DLAT, and is part of the multimeric pyruvate dehydrogenase complex that contains multiple copies of pyruvate dehydrogenase (E1), dihydrolipoamide acetyltransferase (DLAT, E2) and lipoamide dehydrogenase (DLD, E3). Interacts with phosphoglycerate kinase PGK1; the interaction is direct, occurs under hypoxic conditions and leads to PDK1-mediated inhibition of pyruvate dehydrogenase complex activity. Phosphorylated by constitutively activated ABL1, FGFR1, FLT3 and JAK2 (in vitro), and this may also occur in cancer cells that express constitutively activated ABL1, FGFR1, FLT3 and JAK2. Phosphorylation at Tyr-241 and Tyr-242 strongly increases kinase activity, while phosphorylation at Tyr-136 has a lesser effect. Phosphorylated under hypoxic conditions at Thr-336 by phosphoglycerate kinase PGK1 which has an activating effect. In terms of tissue distribution, detected in pancreas islets (at protein level). Expressed predominantly in the heart.

Its subcellular location is the mitochondrion matrix. It carries out the reaction L-seryl-[pyruvate dehydrogenase E1 alpha subunit] + ATP = O-phospho-L-seryl-[pyruvate dehydrogenase E1 alpha subunit] + ADP + H(+). With respect to regulation, activated by binding to the pyruvate dehydrogenase complex subunit DLAT. Strongly activated by NADH plus acetyl-coenzyme A. Inhibited by dichloroacetate. Functionally, kinase that plays a key role in regulation of glucose and fatty acid metabolism and homeostasis via phosphorylation of the pyruvate dehydrogenase subunits PDHA1 and PDHA2. This inhibits pyruvate dehydrogenase activity, and thereby regulates metabolite flux through the tricarboxylic acid cycle, down-regulates aerobic respiration and inhibits the formation of acetyl-coenzyme A from pyruvate. Plays an important role in cellular responses to hypoxia and is important for cell proliferation under hypoxia. This chain is [Pyruvate dehydrogenase (acetyl-transferring)] kinase isozyme 1, mitochondrial (Pdk1), found in Rattus norvegicus (Rat).